The following is a 161-amino-acid chain: uncharacterized protein (161 aa).

This is an uncharacterized protein from Caenorhabditis elegans.